Here is a 734-residue protein sequence, read N- to C-terminus: Protein SKG6 (734 aa).

The segment at 30-68 is disordered; that stretch reads TRRDDSDSSSSSASSTKNSKSAECTGSKQQCQLPTDSSH. A compositionally biased stretch (low complexity) spans 37–51; it reads SSSSSASSTKNSKSA. The span at 53–68 shows a compositional bias: polar residues; it reads CTGSKQQCQLPTDSSH. Residues 72-96 form a helical membrane-spanning segment; sequence VTVGVAVAVPVGVIIIVLAVILCIV. A Phosphoserine modification is found at S137. Position 169 is a phosphothreonine (T169). 3 positions are modified to phosphoserine: S191, S193, and S219. A Phosphothreonine modification is found at T221. Phosphoserine occurs at positions 222 and 251. Residues 239–327 are disordered; sequence RFQESESFRS…LRFGKDDDNY (89 aa). Residues 253–273 show a composition bias toward polar residues; that stretch reads IHNNQLSRGSATEGANKQFTF. A compositionally biased stretch (low complexity) spans 280–299; the sequence is SSSVSEEAEVLNESNESASN. Basic and acidic residues predominate over residues 309–327; sequence SSEKTHERNLRFGKDDDNY. A Phosphoserine modification is found at S369. Positions 647 to 671 are disordered; the sequence is DLTAKPSYKPAGSFRSVSATNSRNN. The segment covering 661-671 has biased composition (polar residues); that stretch reads RSVSATNSRNN. Phosphoserine occurs at positions 672 and 717. Residues 707–734 are disordered; sequence SVGGILPHSGSQDDLRKQLGSSHNYTVN. A compositionally biased stretch (polar residues) spans 725–734; it reads LGSSHNYTVN.

The protein belongs to the SKG6/TOS2 family. Interacts with ZDS1 and ZDS2. Post-translationally, phosphorylated by CDC28.

It is found in the membrane. Functionally, may be involved in the polarity establishment process. Suppresses the lethality of KEX2-GAS1 double null mutant when overexpressed. This chain is Protein SKG6 (SKG6), found in Saccharomyces cerevisiae (strain ATCC 204508 / S288c) (Baker's yeast).